The sequence spans 192 residues: UPF0462 protein C4orf33 homolog (192 aa).

It belongs to the UPF0462 family.

The protein is UPF0462 protein C4orf33 homolog (D3Ertd751e) of Mus musculus (Mouse).